Reading from the N-terminus, the 369-residue chain is N-methyltransferase imqF (369 aa).

Belongs to the methyltransferase superfamily.

The protein operates within secondary metabolite biosynthesis. Functionally, N-methyltransferase; part of the gene cluster that mediates the biosynthesis of imizoquins A to D, tripeptide-derived alkaloids that serve a protective role against oxidative stress that are essential for normal germination. ImqB is a canonical three-module NRPS that assembles the tripeptide backbone of the imizoquins via condensation of Trp, Tyr, and Leu-derived precursors. N-methylation by imqF and phenol oxidation by imqC, followed by cyclization via the FAD-dependent oxidase imqH carry out the three-step transformation of L-tyrosine into tetrahydroisoquinoline. Importantly, this sequence requires the presence of a free amine in the tyrosine moiety, indicating that isoquinoline formation occurs prior to peptide bond formation. The imidazolidin-4-one ring of imizoquins could form following additional oxidation of the methyl-derived bridgehead carbon by imqH. Lastly, O-methylation by imqG and leucine hydroxylation by imqE complete biosynthesis of the imizoquins. The sequence is that of N-methyltransferase imqF from Aspergillus flavus (strain ATCC 200026 / FGSC A1120 / IAM 13836 / NRRL 3357 / JCM 12722 / SRRC 167).